The chain runs to 325 residues: GMP reductase (325 aa).

Cys174 acts as the Thioimidate intermediate in catalysis. NADP(+) is bound at residue 203–226; the sequence is IIADGGIRTHGDIAKSIRFGATMV.

This sequence belongs to the IMPDH/GMPR family. GuaC type 2 subfamily.

The catalysed reaction is IMP + NH4(+) + NADP(+) = GMP + NADPH + 2 H(+). In terms of biological role, catalyzes the irreversible NADPH-dependent deamination of GMP to IMP. It functions in the conversion of nucleobase, nucleoside and nucleotide derivatives of G to A nucleotides, and in maintaining the intracellular balance of A and G nucleotides. In Helicobacter pylori (strain J99 / ATCC 700824) (Campylobacter pylori J99), this protein is GMP reductase.